A 126-amino-acid chain; its full sequence is 3-aminobutyryl-CoA ammonia lyase (126 aa).

It belongs to the KAL family. Homohexamer.

The enzyme catalyses (3S)-3-aminobutanoyl-CoA = (2E)-butenoyl-CoA + NH4(+). The protein operates within amino-acid degradation; L-lysine degradation via acetate pathway. Its function is as follows. Involved in the anaerobic fermentation of lysine. Catalyzes the deamination of L-3-aminobutyryl-CoA to produce crotonoyl-CoA. The protein is 3-aminobutyryl-CoA ammonia lyase of Acetoanaerobium sticklandii (strain ATCC 12662 / DSM 519 / JCM 1433 / CCUG 9281 / NCIMB 10654 / HF) (Clostridium sticklandii).